The sequence spans 206 residues: Small ribosomal subunit protein uS4 (206 aa).

The S4 RNA-binding domain maps to 96-156; it reads TRLDNVVYRM…EKSRTQARIK (61 aa).

This sequence belongs to the universal ribosomal protein uS4 family. In terms of assembly, part of the 30S ribosomal subunit. Contacts protein S5. The interaction surface between S4 and S5 is involved in control of translational fidelity.

Its function is as follows. One of the primary rRNA binding proteins, it binds directly to 16S rRNA where it nucleates assembly of the body of the 30S subunit. Functionally, with S5 and S12 plays an important role in translational accuracy. In Shewanella baltica (strain OS223), this protein is Small ribosomal subunit protein uS4.